Consider the following 529-residue polypeptide: Bifunctional purine biosynthesis protein PurH (529 aa).

One can recognise an MGS-like domain in the interval 1–148 (MQQRRPIRRA…KNHKDVAIVV (148 aa)).

This sequence belongs to the PurH family.

The enzyme catalyses (6R)-10-formyltetrahydrofolate + 5-amino-1-(5-phospho-beta-D-ribosyl)imidazole-4-carboxamide = 5-formamido-1-(5-phospho-D-ribosyl)imidazole-4-carboxamide + (6S)-5,6,7,8-tetrahydrofolate. It carries out the reaction IMP + H2O = 5-formamido-1-(5-phospho-D-ribosyl)imidazole-4-carboxamide. The protein operates within purine metabolism; IMP biosynthesis via de novo pathway; 5-formamido-1-(5-phospho-D-ribosyl)imidazole-4-carboxamide from 5-amino-1-(5-phospho-D-ribosyl)imidazole-4-carboxamide (10-formyl THF route): step 1/1. Its pathway is purine metabolism; IMP biosynthesis via de novo pathway; IMP from 5-formamido-1-(5-phospho-D-ribosyl)imidazole-4-carboxamide: step 1/1. The chain is Bifunctional purine biosynthesis protein PurH from Yersinia enterocolitica serotype O:8 / biotype 1B (strain NCTC 13174 / 8081).